A 106-amino-acid polypeptide reads, in one-letter code: Large ribosomal subunit protein P1A (106 aa).

Ser-2 carries the post-translational modification N-acetylserine. Residues 73-106 are disordered; it reads GGVAGGEAGEAEAEKEEEEAKEESDDDMGFGLFD. Residues 81 to 100 show a composition bias toward acidic residues; the sequence is GEAEAEKEEEEAKEESDDDM. Residue Ser-96 is modified to Phosphoserine.

It belongs to the eukaryotic ribosomal protein P1/P2 family. In terms of assembly, component of the large ribosomal subunit (LSU). Mature yeast ribosomes consist of a small (40S) and a large (60S) subunit. The 40S small subunit contains 1 molecule of ribosomal RNA (18S rRNA) and 33 different proteins (encoded by 57 genes). The large 60S subunit contains 3 rRNA molecules (25S, 5.8S and 5S rRNA) and 46 different proteins (encoded by 81 genes). The 5 acidic ribosomal P-proteins form the stalk structure of the 60S subunit. They are organized as a pentameric complex in which uL10/P0 interacts with 2 heterodimers, P1A-P2B and P1B-P2A. Post-translationally, N-terminally acetylated by acetyltransferase NatA.

It is found in the cytoplasm. Its function is as follows. Component of the ribosome, a large ribonucleoprotein complex responsible for the synthesis of proteins in the cell. The small ribosomal subunit (SSU) binds messenger RNAs (mRNAs) and translates the encoded message by selecting cognate aminoacyl-transfer RNA (tRNA) molecules. The large subunit (LSU) contains the ribosomal catalytic site termed the peptidyl transferase center (PTC), which catalyzes the formation of peptide bonds, thereby polymerizing the amino acids delivered by tRNAs into a polypeptide chain. The nascent polypeptides leave the ribosome through a tunnel in the LSU and interact with protein factors that function in enzymatic processing, targeting, and the membrane insertion of nascent chains at the exit of the ribosomal tunnel. The polypeptide is Large ribosomal subunit protein P1A (Saccharomyces cerevisiae (strain ATCC 204508 / S288c) (Baker's yeast)).